A 324-amino-acid chain; its full sequence is Glyoxylate/hydroxypyruvate reductase B (324 aa).

Residues arginine 237 and glutamate 266 contribute to the active site. The active-site Proton donor is the histidine 285.

Belongs to the D-isomer specific 2-hydroxyacid dehydrogenase family. GhrB subfamily. Homodimer.

It is found in the cytoplasm. The catalysed reaction is glycolate + NADP(+) = glyoxylate + NADPH + H(+). It carries out the reaction (R)-glycerate + NAD(+) = 3-hydroxypyruvate + NADH + H(+). The enzyme catalyses (R)-glycerate + NADP(+) = 3-hydroxypyruvate + NADPH + H(+). Functionally, catalyzes the NADPH-dependent reduction of glyoxylate and hydroxypyruvate into glycolate and glycerate, respectively. The polypeptide is Glyoxylate/hydroxypyruvate reductase B (Salmonella paratyphi B (strain ATCC BAA-1250 / SPB7)).